A 425-amino-acid chain; its full sequence is Formyl-CoA:oxalate CoA-transferase (425 aa).

Residues 17–18 (QS), Arg38, 72–75 (LDTK), 96–98 (NFG), Arg104, and 136–139 (KVYE) contribute to the CoA site. Asp168 (nucleophile) is an active-site residue. Position 247–249 (247–249 (GGQ)) interacts with substrate.

The protein belongs to the CoA-transferase III family. Frc subfamily. In terms of assembly, homodimer.

The catalysed reaction is formyl-CoA + oxalate = oxalyl-CoA + formate. Its pathway is metabolic intermediate degradation; oxalate degradation; CO(2) and formate from oxalate: step 1/2. In terms of biological role, involved in the catabolism of oxalate and in the adapatation to low pH via the induction of the oxalate-dependent acid tolerance response (ATR). Catalyzes the transfer of the CoA moiety from formyl-CoA to oxalate. This Rhodopseudomonas palustris (strain HaA2) protein is Formyl-CoA:oxalate CoA-transferase.